Reading from the N-terminus, the 238-residue chain is MGKKLLQQRAGRGNINFRNPGWLRVGKVRYPTITGHHIAKVVDILHNPGMTEPVAKVKLDTGIQFFIPAVQGLISGQKIEVGEGSPASLGNIVPAKDLPEGVYVSNVELHRGDGGRYARTAGSYAIVVGKSEGKVILRLPSGKIKEIDENALVTVGTVAGGGVLEKPLLKAGNNYWKYKVKATKWPDVRGVAMNVVSHPHGGGLHQSVSRSSTVARNTPPGRKVGHIAARRTGRRDRK.

The disordered stretch occupies residues 199-238; that stretch reads PHGGGLHQSVSRSSTVARNTPPGRKVGHIAARRTGRRDRK. Residues 206–216 are compositionally biased toward polar residues; that stretch reads QSVSRSSTVAR. Over residues 223–238 the composition is skewed to basic residues; that stretch reads KVGHIAARRTGRRDRK.

The protein belongs to the universal ribosomal protein uL2 family. Part of the 50S ribosomal subunit. Forms a bridge to the 30S subunit in the 70S ribosome.

Functionally, one of the primary rRNA binding proteins. Required for association of the 30S and 50S subunits to form the 70S ribosome, for tRNA binding and peptide bond formation. It has been suggested to have peptidyltransferase activity; this is somewhat controversial. Makes several contacts with the 16S rRNA in the 70S ribosome. The polypeptide is Large ribosomal subunit protein uL2 (Metallosphaera sedula (strain ATCC 51363 / DSM 5348 / JCM 9185 / NBRC 15509 / TH2)).